Reading from the N-terminus, the 325-residue chain is BTB/POZ domain-containing protein KCTD12 (325 aa).

Positions 1 to 28 are disordered; sequence MALADSTRGLPNGGGGGGGSGSSSSSAE. N-acetylalanine is present on A2. A compositionally biased stretch (gly residues) spans 11–21; that stretch reads PNGGGGGGGSG. Phosphotyrosine is present on Y119. Residues 129 to 202 form a disordered region; it reads LGAPQQPGPG…PLLTPSQSLD (74 aa). Phosphoserine occurs at positions 151, 171, and 185. T196 carries the post-translational modification Phosphothreonine. Position 200 is a phosphoserine (S200).

Interacts as a tetramer with GABBR1 and GABBR2. As to expression, present in a variety of fetal organs, with highest expression levels in the cochlea and brain and, in stark contrast, is detected only at extremely low levels in adult organs, such as brain and lung.

The protein resides in the presynaptic cell membrane. Its subcellular location is the postsynaptic cell membrane. Functionally, auxiliary subunit of GABA-B receptors that determine the pharmacology and kinetics of the receptor response. Increases agonist potency and markedly alter the G-protein signaling of the receptors by accelerating onset and promoting desensitization. In Homo sapiens (Human), this protein is BTB/POZ domain-containing protein KCTD12 (KCTD12).